The primary structure comprises 520 residues: Cytochrome b5 reductase 4 (520 aa).

M1 is subject to N-acetylmethionine. Residues 1–16 (MLNVPSQSFPGPSSQQ) are compositionally biased toward low complexity. Residues 1–27 (MLNVPSQSFPGPSSQQRVASGGRSKVP) form a disordered region. One can recognise a Cytochrome b5 heme-binding domain in the interval 54–130 (LIEVTEEELK…LKECLVGRMA (77 aa)). Heme is bound by residues H89 and H112. Residues 164–255 (PSSPSYDWFQ…KENTSWKCLG (92 aa)) form the CS domain. The FAD-binding FR-type domain maps to 272 to 384 (LFYRKCQLVS…SNPEGNFIIS (113 aa)). FAD contacts are provided by residues 364–379 (DQLQ…NPEG) and 391–423 (DLFL…KVKL).

The protein belongs to the flavoprotein pyridine nucleotide cytochrome reductase family. FAD is required as a cofactor.

The protein localises to the endoplasmic reticulum. The catalysed reaction is 2 Fe(III)-[cytochrome b5] + NADH = 2 Fe(II)-[cytochrome b5] + NAD(+) + H(+). Functionally, NADH-cytochrome b5 reductase involved in endoplasmic reticulum stress response pathway. Plays a critical role in protecting pancreatic beta-cells against oxidant stress, possibly by protecting the cell from excess buildup of reactive oxygen species (ROS). This chain is Cytochrome b5 reductase 4 (CYB5R4), found in Bos taurus (Bovine).